The following is a 1047-amino-acid chain: Ras GTPase-activating protein 1 (1047 aa).

N-acetylmethionine is present on M1. Residues 181–272 enclose the SH2 1 domain; that stretch reads WYHGKLDRTI…LKGEKLLYPV (92 aa). In terms of domain architecture, SH3 spans 279–341; the sequence is EDRRRVRAIL…VEDLVEEVGR (63 aa). Residues 351 to 441 enclose the SH2 2 domain; the sequence is WFHGKISKQE…VEGYYLKEPV (91 aa). A PH domain is found at 474-577; the sequence is NIVKKGYLLK…WMKGLQAFCN (104 aa). Residues 577-690 enclose the C2 domain; that stretch reads NLRKSSPGTS…QKGHATDEWF (114 aa). Phosphotyrosine is present on Y615. In terms of domain architecture, Ras-GAP spans 764 to 974; the sequence is KLESLLLCTL…HRMIMFLDEL (211 aa). Residue S831 is modified to Phosphoserine.

Interacts with SQSTM1. Interacts with SPSB1; the interaction does not promote degradation. Interacts with CAV2 (tyrosine phosphorylated form). Directly interacts with NCK1. Interacts with PDGFRB (tyrosine phosphorylated). Interacts (via SH2 domain) with the 'Tyr-9' phosphorylated form of PDPK1. Interacts with tyrosine-phosphorylated EPHB4. The N-terminus is blocked. Post-translationally, phosphorylated by SRC and LCK. The phosphorylation SRC inhibits its ability to stimulate the Ras-GTPase activity, whereas phosphorylation by LCK does not display any effect on stimulation activity. In placental villi, detected only in the trophoblast layer (cytotrophoblast and syncytiotrophoblast). Not detected in stromal, endothelial or Hofbauer cells (at protein level).

The protein resides in the cytoplasm. Its function is as follows. Inhibitory regulator of the Ras-cyclic AMP pathway. Stimulates the GTPase of normal but not oncogenic Ras p21; this stimulation may be further increased in the presence of NCK1. The chain is Ras GTPase-activating protein 1 (RASA1) from Homo sapiens (Human).